Consider the following 195-residue polypeptide: Small ribosomal subunit protein uS4 (195 aa).

The region spanning 92-152 (SRLDNIVYRL…EKHKHKANKN (61 aa)) is the S4 RNA-binding domain.

It belongs to the universal ribosomal protein uS4 family. As to quaternary structure, part of the 30S ribosomal subunit. Contacts protein S5. The interaction surface between S4 and S5 is involved in control of translational fidelity.

Functionally, one of the primary rRNA binding proteins, it binds directly to 16S rRNA where it nucleates assembly of the body of the 30S subunit. In terms of biological role, with S5 and S12 plays an important role in translational accuracy. This Karelsulcia muelleri (strain GWSS) (Sulcia muelleri) protein is Small ribosomal subunit protein uS4.